A 490-amino-acid chain; its full sequence is Bifunctional protein GlmU (490 aa).

The interval 1–241 is pyrophosphorylase; sequence MSSPGDTAVL…SALVAGVNNR (241 aa). Residues 12–15, lysine 26, glutamine 83, 88–89, 112–114, glycine 151, glutamate 166, asparagine 181, and asparagine 239 each bind UDP-N-acetyl-alpha-D-glucosamine; these read LAAG, GT, and SGD. Aspartate 114 lines the Mg(2+) pocket. Asparagine 239 serves as a coordination point for Mg(2+). Positions 242–262 are linker; that stretch reads VQLAQLGAELNRRIVAAHQLA. The tract at residues 263–490 is N-acetyltransferase; it reads GVTVVDPATT…AGGRPAGEAE (228 aa). Residues arginine 344 and lysine 362 each contribute to the UDP-N-acetyl-alpha-D-glucosamine site. The active-site Proton acceptor is histidine 374. UDP-N-acetyl-alpha-D-glucosamine-binding residues include tyrosine 377 and asparagine 388. Acetyl-CoA contacts are provided by residues alanine 391, 397–398, serine 416, and alanine 434; that span reads NY. Positions 462–490 are disordered; the sequence is RRKRPGSAAARAAEAAEKAAGGRPAGEAE. Residues 467–490 show a composition bias toward low complexity; the sequence is GSAAARAAEAAEKAAGGRPAGEAE.

This sequence in the N-terminal section; belongs to the N-acetylglucosamine-1-phosphate uridyltransferase family. It in the C-terminal section; belongs to the transferase hexapeptide repeat family. Homotrimer. Mg(2+) serves as cofactor.

The protein resides in the cytoplasm. The catalysed reaction is alpha-D-glucosamine 1-phosphate + acetyl-CoA = N-acetyl-alpha-D-glucosamine 1-phosphate + CoA + H(+). The enzyme catalyses N-acetyl-alpha-D-glucosamine 1-phosphate + UTP + H(+) = UDP-N-acetyl-alpha-D-glucosamine + diphosphate. It participates in nucleotide-sugar biosynthesis; UDP-N-acetyl-alpha-D-glucosamine biosynthesis; N-acetyl-alpha-D-glucosamine 1-phosphate from alpha-D-glucosamine 6-phosphate (route II): step 2/2. It functions in the pathway nucleotide-sugar biosynthesis; UDP-N-acetyl-alpha-D-glucosamine biosynthesis; UDP-N-acetyl-alpha-D-glucosamine from N-acetyl-alpha-D-glucosamine 1-phosphate: step 1/1. Its pathway is bacterial outer membrane biogenesis; LPS lipid A biosynthesis. Functionally, catalyzes the last two sequential reactions in the de novo biosynthetic pathway for UDP-N-acetylglucosamine (UDP-GlcNAc). The C-terminal domain catalyzes the transfer of acetyl group from acetyl coenzyme A to glucosamine-1-phosphate (GlcN-1-P) to produce N-acetylglucosamine-1-phosphate (GlcNAc-1-P), which is converted into UDP-GlcNAc by the transfer of uridine 5-monophosphate (from uridine 5-triphosphate), a reaction catalyzed by the N-terminal domain. In Mycolicibacterium paratuberculosis (strain ATCC BAA-968 / K-10) (Mycobacterium paratuberculosis), this protein is Bifunctional protein GlmU.